A 342-amino-acid polypeptide reads, in one-letter code: L-threonine 3-dehydrogenase (342 aa).

C38 is a Zn(2+) binding site. Residues T40 and H43 each act as charge relay system in the active site. The Zn(2+) site is built by H63, E64, C93, C96, C99, and C107. NAD(+) is bound by residues I175, D195, R200, 262–264 (LGI), and 286–287 (IY).

Belongs to the zinc-containing alcohol dehydrogenase family. As to quaternary structure, homotetramer. The cofactor is Zn(2+).

The protein resides in the cytoplasm. The catalysed reaction is L-threonine + NAD(+) = (2S)-2-amino-3-oxobutanoate + NADH + H(+). It functions in the pathway amino-acid degradation; L-threonine degradation via oxydo-reductase pathway; glycine from L-threonine: step 1/2. In terms of biological role, catalyzes the NAD(+)-dependent oxidation of L-threonine to 2-amino-3-ketobutyrate. The protein is L-threonine 3-dehydrogenase of Paraburkholderia phymatum (strain DSM 17167 / CIP 108236 / LMG 21445 / STM815) (Burkholderia phymatum).